The chain runs to 233 residues: Mediator of RNA polymerase II transcription subunit 7 (233 aa).

K185 participates in a covalent cross-link: Glycyl lysine isopeptide (Lys-Gly) (interchain with G-Cter in SUMO1); alternate. Residue K185 forms a Glycyl lysine isopeptide (Lys-Gly) (interchain with G-Cter in SUMO2); alternate linkage. Residues 188-213 (PMDADDSNNCTGQSDQQRENSGHRRD) form a disordered region. The residue at position 194 (S194) is a Phosphoserine. Basic and acidic residues predominate over residues 203 to 213 (QQRENSGHRRD).

The protein belongs to the Mediator complex subunit 7 family. In terms of assembly, component of the Mediator complex, which is composed of MED1, MED4, MED6, MED7, MED8, MED9, MED10, MED11, MED12, MED13, MED13L, MED14, MED15, MED16, MED17, MED18, MED19, MED20, MED21, MED22, MED23, MED24, MED25, MED26, MED27, MED29, MED30, MED31, CCNC, CDK8 and CDC2L6/CDK11. The MED12, MED13, CCNC and CDK8 subunits form a distinct module termed the CDK8 module. Mediator containing the CDK8 module is less active than Mediator lacking this module in supporting transcriptional activation. Individual preparations of the Mediator complex lacking one or more distinct subunits have been variously termed ARC, CRSP, DRIP, PC2, SMCC and TRAP.

It is found in the nucleus. Component of the Mediator complex, a coactivator involved in the regulated transcription of nearly all RNA polymerase II-dependent genes. Mediator functions as a bridge to convey information from gene-specific regulatory proteins to the basal RNA polymerase II transcription machinery. Mediator is recruited to promoters by direct interactions with regulatory proteins and serves as a scaffold for the assembly of a functional preinitiation complex with RNA polymerase II and the general transcription factors. The polypeptide is Mediator of RNA polymerase II transcription subunit 7 (MED7) (Sus scrofa (Pig)).